Reading from the N-terminus, the 147-residue chain is UPF0306 protein YhbP (147 aa).

This sequence belongs to the UPF0306 family.

This chain is UPF0306 protein YhbP, found in Escherichia coli O1:K1 / APEC.